Consider the following 1202-residue polypeptide: Liprin-alpha-1 (1202 aa).

The disordered stretch occupies residues 1 to 33 (MMCEVMPTISEAEGPPGGGGGHGSGSPSQPDAD). A compositionally biased stretch (gly residues) spans 15 to 24 (PPGGGGGHGS). Positions 34-141 (SHFEQLMVSM…VSRHERSLRM (108 aa)) form a coiled coil. Ser150 carries the phosphoserine modification. A coiled-coil region spans residues 176–214 (EKVRERLRVALERCSLLEEELGATHKELMILKEQNNQKK). Disordered regions lie at residues 224–245 (NHEQ…SLSH) and 426–446 (KNQE…HNKR). Residue Thr230 is modified to Phosphothreonine. Residues Ser239, Ser242, and Ser244 each carry the phosphoserine modification. 2 coiled-coil regions span residues 249-521 (LAKV…GASL) and 623-669 (ADAH…SGSL). Ser448 is subject to Phosphoserine. Positions 651–662 (ENTEQRAEEIES) are enriched in basic and acidic residues. A disordered region spans residues 651 to 855 (ENTEQRAEEI…SKLGGQAEKN (205 aa)). Phosphoserine occurs at positions 666, 668, and 693. The segment covering 686-700 (ASSLASSSPPGSGRS) has biased composition (low complexity). The segment covering 725–736 (SREEVRDDKTTI) has biased composition (basic and acidic residues). Position 761 is a phosphothreonine (Thr761). Residues 762-771 (VSHEDIRDIR) are compositionally biased toward basic and acidic residues. A Phosphoserine modification is found at Ser763. The segment covering 832–841 (VSETDNSSQD) has biased composition (polar residues). Residues 847–871 (KLGGQAEKNRKLQKKHELLEEARRQ) adopt a coiled-coil conformation. SAM domains follow at residues 878-944 (WDGP…IMSL), 963-1027 (NHEW…LRRL), and 1051-1120 (WSND…LLVM). Residues 1021–1050 (IMCLRRLNYDRKELERKREESQSEIKDVLV) are a coiled coil. Phosphoserine is present on Ser1133. At Thr1159 the chain carries Phosphothreonine. The interval 1163–1202 (NFRVTSSMSSPSMQPKKMQMDGNVSGTQRLDSATVRTYSC) is disordered. Low complexity predominate over residues 1168 to 1179 (SSMSSPSMQPKK). Residues 1184-1202 (GNVSGTQRLDSATVRTYSC) show a composition bias toward polar residues.

It belongs to the liprin family. Liprin-alpha subfamily. Homodimer. Interacts with PTPRF (via D2 domain). Part of a cortical microtubule stabilization complex (CMSC) composed of KANK1, PPFIA1, PPFIBP1, ERC1/ELKS, PHLDB2/LL5beta, CLASPs, KIF21A and possibly additional interactors; within CMSCs KANK1 and PHLDB2/LL5beta seem to be the core components for recruiting microtubule-binding proteins KIF21A and CLASPs, whereas PPFIA1, PPFIBP1 and ERC1/ELKS serve as scaffolds for protein clustering. As to expression, ubiquitous.

It is found in the cytoplasm. It localises to the cell cortex. In terms of biological role, may regulate the disassembly of focal adhesions. May localize receptor-like tyrosine phosphatases type 2A at specific sites on the plasma membrane, possibly regulating their interaction with the extracellular environment and their association with substrates. This is Liprin-alpha-1 (PPFIA1) from Homo sapiens (Human).